Reading from the N-terminus, the 165-residue chain is Large ribosomal subunit protein uL15 (165 aa).

Over residues 1 to 29 the composition is skewed to basic residues; the sequence is MTSKKKRQRGSRTHGGGSHKNRRGAGHRG. Disordered regions lie at residues 1–59 and 133–165; these read MTSK…QKVQ and KVEG…ADEE. The span at 30 to 47 shows a compositional bias: basic and acidic residues; the sequence is GRGDAGRDKHEFHNHEPL. Residues 154–165 are compositionally biased toward acidic residues; it reads AEETEDADADEE.

It belongs to the universal ribosomal protein uL15 family. In terms of assembly, part of the 50S ribosomal subunit. Interacts weakly with proteins L18e and L32e.

Its function is as follows. Binds to the 23S rRNA. In Haloarcula marismortui (strain ATCC 43049 / DSM 3752 / JCM 8966 / VKM B-1809) (Halobacterium marismortui), this protein is Large ribosomal subunit protein uL15 (rpl15).